We begin with the raw amino-acid sequence, 345 residues long: Centromere protein U (345 aa).

2 stretches are compositionally biased toward basic residues: residues 1–10 (MSSKKRTKRN) and 19–29 (HKGRSHPRRKF). 2 disordered regions span residues 1–37 (MSSK…EPDV) and 64–153 (AVDA…SSVQ). The span at 88–106 (NAERSEKMLLETPEGDVHE) shows a compositional bias: basic and acidic residues. Positions 142 to 152 (SDSSVNSPSSV) are enriched in low complexity. Positions 201–294 (CSAFEDQVTD…QDYLDYREEN (94 aa)) form a coiled coil. The Nuclear localization signal motif lies at 222–239 (KKKNAKVVADIKKKRQRL).

The protein belongs to the CENP-U/AME1 family. Interacts with CENPH-CENPI complex at the kinetochore.

The protein localises to the nucleus. Its subcellular location is the chromosome. It is found in the centromere. Functionally, probable component of a centromeric complex involved in assembly of kinetochore proteins, mitotic progression and chromosome segregation. Required for maintenance of sister chromatid adhesion during mitotic checkpoint activation. The polypeptide is Centromere protein U (CENPU) (Gallus gallus (Chicken)).